Here is a 139-residue protein sequence, read N- to C-terminus: Flagellar assembly factor FliW 2 (139 aa).

It belongs to the FliW family. As to quaternary structure, interacts with translational regulator CsrA and flagellin(s).

It is found in the cytoplasm. Functionally, acts as an anti-CsrA protein, binds CsrA and prevents it from repressing translation of its target genes, one of which is flagellin. Binds to flagellin and participates in the assembly of the flagellum. This Helicobacter hepaticus (strain ATCC 51449 / 3B1) protein is Flagellar assembly factor FliW 2.